The primary structure comprises 886 residues: Desmocollin-1 (886 aa).

A signal peptide spans 1–29; it reads MAVACAAPGSTFSKQLLFFLLVLVLFCDA. A propeptide spanning residues 30 to 134 is cleaved from the precursor; sequence CQKVSLHVPS…KEPVHNRSKR (105 aa). Asn-130 and Asn-165 each carry an N-linked (GlcNAc...) asparagine glycan. 5 Cadherin domains span residues 135-242, 243-354, 355-471, 472-575, and 576-682; these read RWAP…APYF, ETKL…SPYF, TQTS…GPEC, QPPV…DHPP, and QIDK…EERD. At 135–691 the chain is on the extracellular side; sequence RWAPIPCSLM…DAKPNIILGK (557 aa). Thr-385 is modified (phosphothreonine). N-linked (GlcNAc...) (high mannose) asparagine glycosylation is present at Asn-546. Asn-613 is a glycosylation site (N-linked (GlcNAc...) asparagine). Residues 692–714 traverse the membrane as a helical segment; the sequence is WAILAMVLGSALLLCILFTCFCV. Residues 715–886 are Cytoplasmic-facing; the sequence is TTTKRTVKKC…RTLAKTCVKK (172 aa).

As to quaternary structure, binds to JUP/plakoglobin. As to expression, expressed in the epidermis and inner root sheaths of hair follicles (at protein level).

It localises to the cell membrane. The protein resides in the cell junction. It is found in the desmosome. A component of desmosome cell-cell junctions which are required for positive regulation of cellular adhesion. Required for desmosome adhesion strength between the granular layers of the epidermis, as a result moderates epidermal proliferation and differentiation. Is therefore required to maintain postnatal epidermal barrier function and normal hair follicle morphology into adulthood. The sequence is that of Desmocollin-1 (Dsc1) from Mus musculus (Mouse).